The chain runs to 109 residues: Nucleoid-associated protein LBUL_1514 (109 aa).

This sequence belongs to the YbaB/EbfC family. In terms of assembly, homodimer.

It localises to the cytoplasm. Its subcellular location is the nucleoid. Its function is as follows. Binds to DNA and alters its conformation. May be involved in regulation of gene expression, nucleoid organization and DNA protection. The chain is Nucleoid-associated protein LBUL_1514 from Lactobacillus delbrueckii subsp. bulgaricus (strain ATCC BAA-365 / Lb-18).